Reading from the N-terminus, the 165-residue chain is E3 ubiquitin ligase complex SCF subunit sconC (165 aa).

The tract at residues 106–165 (ILAANYLDIKALLDVGCKTVANMIKGKSPEEIRKTFNIQNDFTPEEEDQIRRENEWAEDR) is interaction with the F-box domain of F-box proteins.

This sequence belongs to the SKP1 family. Component of the SCF (SKP1-CUL1-F-box protein) E3 ubiquitin ligase complexes.

Its pathway is protein modification; protein ubiquitination. Functionally, essential component of the SCF (SKP1-CUL1-F-box protein) E3 ubiquitin ligase complexes, which mediate the ubiquitination and subsequent proteasomal degradation of target proteins. Controls sulfur metabolite repression, probably by mediating the inactivation or degradation of the metR transcription factor. This is E3 ubiquitin ligase complex SCF subunit sconC (sconC) from Arthroderma otae (Microsporum canis).